The sequence spans 332 residues: Probable L-asparaginase (332 aa).

Residues 6–332 (PTIALLATGG…AKIQEMFEEY (327 aa)) enclose the Asparaginase/glutaminase domain. Residue threonine 16 is the O-isoaspartyl threonine intermediate of the active site. Residues serine 62 and 95–96 (TD) contribute to the substrate site.

It belongs to the asparaginase 1 family.

It localises to the cytoplasm. The enzyme catalyses L-asparagine + H2O = L-aspartate + NH4(+). This chain is Probable L-asparaginase (ansA), found in Helicobacter pylori (strain J99 / ATCC 700824) (Campylobacter pylori J99).